The chain runs to 446 residues: C-type lectin domain family 18 member A (446 aa).

The first 26 residues, 1–26 (MLHPETSPGRGHLLAVLLALLGTAWA), serve as a signal peptide directing secretion. Residues 52-182 (LSLHNRLRSW…AAIEAFVCAY (131 aa)) form the SCP domain. Asn-144 carries an N-linked (GlcNAc...) asparagine glycan. Residues 228 to 261 (PRNPCRMSCQNHGRLNISTCHCHCPPGYTGRYCQ) enclose the EGF-like domain. Intrachain disulfides connect Cys-236–Cys-249, Cys-251–Cys-260, Cys-327–Cys-432, and Cys-408–Cys-424. Residues 306 to 433 (IDGDCFMVSS…CKTRNRYICQ (128 aa)) form the C-type lectin domain.

In terms of processing, N-glycosylated. As to expression, dectected in all cell lines tested and in peripheral blood cells.

The protein resides in the secreted. The protein localises to the endoplasmic reticulum. It localises to the golgi apparatus. It is found in the endosome. Functionally, binds polysaccharides in a Ca(2+)-independent manner with a preferentially binding to fucoidan, beta-glucans and galactans. This chain is C-type lectin domain family 18 member A (CLEC18A), found in Homo sapiens (Human).